We begin with the raw amino-acid sequence, 345 residues long: N-acetyl-gamma-glutamyl-phosphate reductase (345 aa).

Cys-149 is an active-site residue.

It belongs to the NAGSA dehydrogenase family. Type 1 subfamily.

Its subcellular location is the cytoplasm. The enzyme catalyses N-acetyl-L-glutamate 5-semialdehyde + phosphate + NADP(+) = N-acetyl-L-glutamyl 5-phosphate + NADPH + H(+). It functions in the pathway amino-acid biosynthesis; L-arginine biosynthesis; N(2)-acetyl-L-ornithine from L-glutamate: step 3/4. Functionally, catalyzes the NADPH-dependent reduction of N-acetyl-5-glutamyl phosphate to yield N-acetyl-L-glutamate 5-semialdehyde. The polypeptide is N-acetyl-gamma-glutamyl-phosphate reductase (Bacillus thuringiensis subsp. konkukian (strain 97-27)).